Consider the following 37-residue polypeptide: Large ribosomal subunit protein bL36 (37 aa).

The protein belongs to the bacterial ribosomal protein bL36 family.

The polypeptide is Large ribosomal subunit protein bL36 (Heliobacterium modesticaldum (strain ATCC 51547 / Ice1)).